A 238-amino-acid polypeptide reads, in one-letter code: Probable xyloglucan-specific endo-beta-1,4-glucanase A (238 aa).

Residues 1–18 (MKLSLSVALSLAAATAQA) form the signal peptide. N106 and N171 each carry an N-linked (GlcNAc...) asparagine glycan.

It belongs to the glycosyl hydrolase 12 (cellulase H) family.

It localises to the secreted. The enzyme catalyses xyloglucan + H2O = xyloglucan oligosaccharides.. Catalyzes endohydrolysis of 1,4-beta-D-glucosidic linkages in xyloglucan with retention of the beta-configuration of the glycosyl residues. Specific for xyloglucan and does not hydrolyze other cell wall components. This is Probable xyloglucan-specific endo-beta-1,4-glucanase A (xgeA) from Aspergillus fumigatus (strain CBS 144.89 / FGSC A1163 / CEA10) (Neosartorya fumigata).